A 291-amino-acid chain; its full sequence is Bis(5'-nucleosyl)-tetraphosphatase, symmetrical (291 aa).

This sequence belongs to the Ap4A hydrolase family.

It catalyses the reaction P(1),P(4)-bis(5'-adenosyl) tetraphosphate + H2O = 2 ADP + 2 H(+). Its function is as follows. Hydrolyzes diadenosine 5',5'''-P1,P4-tetraphosphate to yield ADP. This Coxiella burnetii (strain CbuK_Q154) (Coxiella burnetii (strain Q154)) protein is Bis(5'-nucleosyl)-tetraphosphatase, symmetrical.